Here is a 793-residue protein sequence, read N- to C-terminus: Facilitated trehalose transporter Tret1 (793 aa).

Topologically, residues 1 to 326 (MNRKVGPVLE…LEVYRPTTNP (326 aa)) are cytoplasmic. Disordered regions lie at residues 99-148 (EKAK…EHKS) and 213-235 (RHIS…FEPS). Residues 104–113 (KSSLKSSRVS) show a composition bias toward low complexity. The segment covering 115–125 (DQEDDRFDEDE) has biased composition (acidic residues). Positions 213-223 (RHISFKFDKEP) are enriched in basic and acidic residues. Residues 327–347 (IYIWTQVLAALSVSLGSMVVG) traverse the membrane as a helical segment. Residues 348–376 (FSSAYTSPALVSMKDRNITSFEVTDQSGS) are Extracellular-facing. A glycan (N-linked (GlcNAc...) asparagine) is linked at N364. A helical membrane pass occupies residues 377 to 397 (WVGGIMPLAGLAGGILGGPMI). Over 398–411 (EYLGRKNTILATAT) the chain is Cytoplasmic. Residues 412-432 (PFIISWLLIGCATHVAMVLVG) traverse the membrane as a helical segment. Residues 433-434 (RA) lie on the Extracellular side of the membrane. The chain crosses the membrane as a helical span at residues 435–455 (LSGLCVGIASLSLPVYLGETV). Topologically, residues 456–460 (QPEVR) are cytoplasmic. Residues 461–481 (GTLGLLPTAFGNIGILLCFVA) traverse the membrane as a helical segment. Residues 482–488 (GKYLDWS) lie on the Extracellular side of the membrane. The chain crosses the membrane as a helical span at residues 489-509 (GLAFLGAALPIPFLLLMFLIP). Residues 510 to 572 (ETPRWYVSRN…DLLNKANLKP (63 aa)) lie on the Cytoplasmic side of the membrane. Residues 573 to 593 (LLISLGLMFFQQLSGINAVIF) traverse the membrane as a helical segment. Residues 594–609 (YTVQIFQSAGSTIDEK) lie on the Extracellular side of the membrane. Residues 610 to 630 (LCTIIVGVVNFIATFIATVLI) form a helical membrane-spanning segment. Topologically, residues 631-636 (DRLGRK) are cytoplasmic. A helical transmembrane segment spans residues 637-657 (ILLYISDVAMIITLMTLGTFF). Topologically, residues 658 to 668 (YMKNNGDDVSE) are extracellular. The chain crosses the membrane as a helical span at residues 669–689 (IGWLPLAAFVVFVVGFSLGFG). Residues 690-703 (PIPWLMMGEILPGK) are Cytoplasmic-facing. A helical membrane pass occupies residues 704–724 (IRGSAASVATAFNWSCTFVVT). Topologically, residues 725-737 (KTFADITASIGNH) are extracellular. The helical transmembrane segment at 738-758 (GAFWMFGSICIVGLLFVIVYV) threads the bilayer. The Cytoplasmic portion of the chain corresponds to 759–793 (PETQGKSLEDIERKMMGRVRRMSSVANIKPLSFNM).

Belongs to the major facilitator superfamily. Sugar transporter (TC 2.A.1.1) family. Trehalose transporter subfamily.

It localises to the cell membrane. High-capacity facilitative transporter for trehalose. Does not transport maltose, sucrose or lactose. Mediates the bidirectional transfer of trehalose. Responsible for the transport of trehalose synthesized in the fat body and the incorporation of trehalose into other tissues that require a carbon source, thereby regulating trehalose levels in the hemolymph. In Anopheles gambiae (African malaria mosquito), this protein is Facilitated trehalose transporter Tret1.